The following is a 324-amino-acid chain: Aspartate carbamoyltransferase catalytic subunit (324 aa).

Arg65 and Thr66 together coordinate carbamoyl phosphate. Lys93 contacts L-aspartate. Arg115, His145, and Gln148 together coordinate carbamoyl phosphate. Arg178 and Arg233 together coordinate L-aspartate. Residues Gly274 and Pro275 each contribute to the carbamoyl phosphate site.

This sequence belongs to the aspartate/ornithine carbamoyltransferase superfamily. ATCase family. As to quaternary structure, heterododecamer (2C3:3R2) of six catalytic PyrB chains organized as two trimers (C3), and six regulatory PyrI chains organized as three dimers (R2).

The catalysed reaction is carbamoyl phosphate + L-aspartate = N-carbamoyl-L-aspartate + phosphate + H(+). It functions in the pathway pyrimidine metabolism; UMP biosynthesis via de novo pathway; (S)-dihydroorotate from bicarbonate: step 2/3. Its function is as follows. Catalyzes the condensation of carbamoyl phosphate and aspartate to form carbamoyl aspartate and inorganic phosphate, the committed step in the de novo pyrimidine nucleotide biosynthesis pathway. The chain is Aspartate carbamoyltransferase catalytic subunit from Nitrosococcus oceani (strain ATCC 19707 / BCRC 17464 / JCM 30415 / NCIMB 11848 / C-107).